Consider the following 78-residue polypeptide: Acyl carrier protein (78 aa).

Positions 2-77 constitute a Carrier domain; sequence SNLEERVKKI…AAIDYVTANA (76 aa). Position 37 is an O-(pantetheine 4'-phosphoryl)serine (serine 37).

Belongs to the acyl carrier protein (ACP) family. Post-translationally, 4'-phosphopantetheine is transferred from CoA to a specific serine of apo-ACP by AcpS. This modification is essential for activity because fatty acids are bound in thioester linkage to the sulfhydryl of the prosthetic group.

It is found in the cytoplasm. The protein operates within lipid metabolism; fatty acid biosynthesis. Functionally, carrier of the growing fatty acid chain in fatty acid biosynthesis. In Vibrio vulnificus (strain CMCP6), this protein is Acyl carrier protein.